The sequence spans 204 residues: GATA transcription factor 14 (204 aa).

Basic and acidic residues predominate over residues 57–66 (REFDTNDSKP). A disordered region spans residues 57–102 (REFDTNDSKPSRNFSNLPTATRGRLHAPKRSGNKRGRQKRLSFKSP). A compositionally biased stretch (basic residues) spans 79–98 (GRLHAPKRSGNKRGRQKRLS). A GATA-type zinc finger spans residues 111–165 (GITDKSCSHCGTRKTPLWREGPRGAGTLCNACGMRYRTGRLLPEYRPASSPDFKP). The interval 180 to 204 (RERKSSPPNSFGFSESYHSTRKLGF) is disordered. The span at 185 to 196 (SPPNSFGFSESY) shows a compositional bias: polar residues.

Belongs to the type IV zinc-finger family. Class A subfamily.

It is found in the nucleus. In terms of biological role, transcriptional activator that specifically binds 5'-GATA-3' or 5'-GAT-3' motifs within gene promoters. May be involved in the regulation of some light-responsive genes. The chain is GATA transcription factor 14 (GATA14) from Arabidopsis thaliana (Mouse-ear cress).